The sequence spans 141 residues: Hemoglobin subunit alpha (141 aa).

In terms of domain architecture, Globin spans 1–141 (VLSPADKSNV…VSTVLTSKYR (141 aa)). Serine 3 is subject to Phosphoserine. N6-succinyllysine is present on residues lysine 7 and lysine 11. Lysine 16 carries the post-translational modification N6-acetyllysine; alternate. Residue lysine 16 is modified to N6-succinyllysine; alternate. Tyrosine 24 carries the post-translational modification Phosphotyrosine. Serine 35 carries the phosphoserine modification. Lysine 40 carries the N6-succinyllysine modification. Residue serine 49 is modified to Phosphoserine. Histidine 58 is a binding site for O2. Position 87 (histidine 87) interacts with heme b. The residue at position 102 (serine 102) is a Phosphoserine. Threonine 108 carries the phosphothreonine modification. Phosphoserine is present on residues serine 124 and serine 131. Phosphothreonine occurs at positions 134 and 137. A Phosphoserine modification is found at serine 138.

Belongs to the globin family. As to quaternary structure, heterotetramer of two alpha chains and two beta chains. Red blood cells.

In terms of biological role, involved in oxygen transport from the lung to the various peripheral tissues. Hemopressin acts as an antagonist peptide of the cannabinoid receptor CNR1. Hemopressin-binding efficiently blocks cannabinoid receptor CNR1 and subsequent signaling. The polypeptide is Hemoglobin subunit alpha (HBA) (Leontocebus fuscicollis (Brown-mantled tamarin)).